The chain runs to 130 residues: MAKAAAPRIRKKERKNIISGVAHVLSTFNNTMITISDAQGNAIAWSSAGAQGFKGSRKSTPYAAQVAAEDAGRKAREHGMETLEIEVSGPGSGRESALRALQAVGFSITSIRDMTPVPHNGCRPRKRRRV.

It belongs to the universal ribosomal protein uS11 family. As to quaternary structure, part of the 30S ribosomal subunit. Interacts with proteins S7 and S18. Binds to IF-3.

Its function is as follows. Located on the platform of the 30S subunit, it bridges several disparate RNA helices of the 16S rRNA. Forms part of the Shine-Dalgarno cleft in the 70S ribosome. In Gluconacetobacter diazotrophicus (strain ATCC 49037 / DSM 5601 / CCUG 37298 / CIP 103539 / LMG 7603 / PAl5), this protein is Small ribosomal subunit protein uS11.